The primary structure comprises 1062 residues: MGARPLTLLRALLLPLLAGAQAAIVFIKEPSSQDALQGRRALLRCEVEAPDPVHVYWLLNGVPVQDTERRFAQGSSLSFAAVDRLQDSGAFQCVARDNVTGEEVRSTNASFNIKWIEAGPVVLKHPASEAEIQPQTQVTLRCHIDGHPRPTYQWFRDGTPLSDDQSTHTVSSRERNLTLRPASPEHSGLYSCCAHNAFGQACSSQNFTLSVADESFARVVLAPQDVVVARNEEAMFHCQFSAQPPPSLQWVFEDETPITNRSRPPHLRRAVVFANGSLLLTQVRPRNAGVYRCIGQGQRGPPIVLEATLHLAEIEDMLPFEPRVFIAGDEERVTCPAPQGLPTPSVWWEHAGVPLPAHGRVHQKGLELVFVTIAESDTGVYTCHASNLAGQRRQDVNITVATVPTWLRKPQDSQLEEGKPGYLHCLTQATPKPTVIWYRNQMLISEDSRFEVSKNGTLRINSVEVYDGTLYRCVSSTPAGSIEAQARVQVLEKLKFTPPPQPQQCMEFDKEATVPCSATGREKPTVKWVRADGSSLPEWVTDNAGTLHFARVTRDDAGNYTCIASNEPQGQIRAHVQLTVAVFITFKVEPERTTVYQGHTALLRCEAQGDPKPLIQWKGKDRILDPTKLGPRMHIFQNGSLVIHDVAPEDSGSYTCIAGNSCNIRHTEAPLLVVDKPVMEDSEGPGSPPPYKMIQTIGLSVGAAVAYIIAVLGLMFYCKKRCKAKRLQKQPEGEEPEMECLNGGPLQNGQPSAEIQEEVALTSLGSGPPATNKRHSAGDRMHFPRASLQPITTLGKSEFGEVFLAKAQGVEEGATETLVLVKSLQSRDEQQQLDFRREVEMFGKLNHANVVRLLGLCREAEPHYMVLEYVDLGDLKQFLRISKNKDEKLKSQPLSTKQKVALCSQVALGMEHLSNNRFVHKDLAARNCLISAQRQVKVSALGLSKDVYNSEYYHFRQAWVPLRWMSPEAVLEGDFSTKSDVWAFGVLMWEVFTHGEMPHGGQADDEVLADLQAGKARLPQPEGCPSKLYRLMQRCWAPNPKDRPSFSEIASTLGDSPADSKQ.

Residues 1–22 form the signal peptide; it reads MGARPLTLLRALLLPLLAGAQA. 7 consecutive Ig-like C2-type domains span residues 23 to 112, 120 to 210, 217 to 309, 301 to 399, 404 to 489, 495 to 578, and 570 to 672; these read AIVF…ASFN, PVVL…FTLS, ARVV…EATL, PPIV…VNIT, PTWL…ARVQ, KFTP…HVQL, and GQIR…APLL. Topologically, residues 23–696 are extracellular; that stretch reads AIVFIKEPSS…SPPPYKMIQT (674 aa). The cysteines at positions 45 and 93 are disulfide-linked. N-linked (GlcNAc...) asparagine glycans are attached at residues N98, N108, N176, N206, N260, and N275. C142 and C192 are joined by a disulfide. Intrachain disulfides connect C238–C293 and C335–C383. 4 N-linked (GlcNAc...) asparagine glycosylation sites follow: N397, N455, N559, and N638. Disulfide bonds link C425–C473, C516–C562, and C605–C656. The helical transmembrane segment at 697-717 threads the bilayer; it reads IGLSVGAAVAYIIAVLGLMFY. At 718–1062 the chain is on the cytoplasmic side; the sequence is CKKRCKAKRL…LGDSPADSKQ (345 aa). Disordered regions lie at residues 728 to 750 and 1039 to 1062; these read QKQP…QNGQ and NPKD…DSKQ. The tract at residues 786–1062 is interaction with CTNNB1; sequence ASLQPITTLG…LGDSPADSKQ (277 aa). The region spanning 788-1058 is the Protein kinase; inactive domain; sequence LQPITTLGKS…IASTLGDSPA (271 aa). S1056 is modified (phosphoserine).

Belongs to the protein kinase superfamily. Tyr protein kinase family. Insulin receptor subfamily. Interacts with CTNNB1. MMP14 cleaves PTK7 between Pro-613 and Leu-614 generating an N-terminal soluble (70 kDa) fragment and a membrane C-terminal (50 kDa) fragment. Proteolysis by MMP14 regulates PTK7 function in non-canonical Wnt signaling pathway. As to expression, expressed at high levels in lung and un-pregnant uterus among adult tissues, and in the tail, limbs, somites, gut and craniofacial regions among embryonic tissues.

It is found in the membrane. The protein localises to the cell junction. Its function is as follows. Inactive tyrosine kinase involved in Wnt signaling pathway. Component of both the non-canonical (also known as the Wnt/planar cell polarity signaling) and the canonical Wnt signaling pathway. Functions in cell adhesion, cell migration, cell polarity, proliferation, actin cytoskeleton reorganization and apoptosis. Has a role in embryogenesis, epithelial tissue organization and angiogenesis. This is Inactive tyrosine-protein kinase 7 (Ptk7) from Mus musculus (Mouse).